The sequence spans 759 residues: DNA replication licensing factor mcm-5 (759 aa).

Positions Ala-330–Ile-536 constitute an MCM domain. Residue Arg-370 coordinates ADP. The Arginine finger motif lies at Ser-511 to Asp-514.

This sequence belongs to the MCM family. As to quaternary structure, component of the mcm2-7 complex. The complex forms a toroidal hexameric ring with the proposed subunit order mcm2-mcm6-mcm4-mcm7-mcm3-mcm5 (By simililarity).

Its subcellular location is the nucleus. The protein resides in the cytoplasm. It is found in the cytosol. The enzyme catalyses ATP + H2O = ADP + phosphate + H(+). Acts as a component of the MCM2-7 complex (MCM complex) which is the replicative helicase essential for 'once per cell cycle' DNA replication initiation and elongation in eukaryotic cells. Core component of CDC45-MCM-GINS (CMG) helicase, the molecular machine that unwinds template DNA during replication, and around which the replisome is built. The active ATPase sites in the MCM2-7 ring are formed through the interaction surfaces of two neighboring subunits such that a critical structure of a conserved arginine finger motif is provided in trans relative to the ATP-binding site of the Walker A box of the adjacent subunit. The six ATPase active sites, however, are likely to contribute differentially to the complex helicase activity. The protein is DNA replication licensing factor mcm-5 (mcm-5) of Caenorhabditis elegans.